We begin with the raw amino-acid sequence, 168 residues long: Ribosome maturation factor RimM (168 aa).

One can recognise a PRC barrel domain in the interval Glu-93–Ile-167.

The protein belongs to the RimM family. Binds ribosomal protein uS19.

The protein resides in the cytoplasm. Functionally, an accessory protein needed during the final step in the assembly of 30S ribosomal subunit, possibly for assembly of the head region. Essential for efficient processing of 16S rRNA. May be needed both before and after RbfA during the maturation of 16S rRNA. It has affinity for free ribosomal 30S subunits but not for 70S ribosomes. This chain is Ribosome maturation factor RimM, found in Wolbachia sp. subsp. Brugia malayi (strain TRS).